We begin with the raw amino-acid sequence, 451 residues long: Chaperone SurA (451 aa).

Residues 1–26 (MKKIIPTNLFKLISILFILTPFFAWS) form the signal peptide. PpiC domains lie at 179–280 (DVEY…QLQG) and 290–388 (KQYH…FLDG).

The protein localises to the periplasm. It carries out the reaction [protein]-peptidylproline (omega=180) = [protein]-peptidylproline (omega=0). Its function is as follows. Chaperone involved in the correct folding and assembly of outer membrane proteins. Recognizes specific patterns of aromatic residues and the orientation of their side chains, which are found more frequently in integral outer membrane proteins. May act in both early periplasmic and late outer membrane-associated steps of protein maturation. In Hydrogenovibrio crunogenus (strain DSM 25203 / XCL-2) (Thiomicrospira crunogena), this protein is Chaperone SurA.